Reading from the N-terminus, the 233-residue chain is Octanoyltransferase (233 aa).

Residues 34 to 212 (PDRPDVLLLL…AFAQTFELDL (179 aa)) enclose the BPL/LPL catalytic domain. Substrate-binding positions include 76 to 83 (RGGEVTHH), 143 to 145 (AIG), and 156 to 158 (GFA). C174 serves as the catalytic Acyl-thioester intermediate.

The protein belongs to the LipB family.

The protein localises to the cytoplasm. The catalysed reaction is octanoyl-[ACP] + L-lysyl-[protein] = N(6)-octanoyl-L-lysyl-[protein] + holo-[ACP] + H(+). Its pathway is protein modification; protein lipoylation via endogenous pathway; protein N(6)-(lipoyl)lysine from octanoyl-[acyl-carrier-protein]: step 1/2. In terms of biological role, catalyzes the transfer of endogenously produced octanoic acid from octanoyl-acyl-carrier-protein onto the lipoyl domains of lipoate-dependent enzymes. Lipoyl-ACP can also act as a substrate although octanoyl-ACP is likely to be the physiological substrate. The polypeptide is Octanoyltransferase (Synechococcus elongatus (strain ATCC 33912 / PCC 7942 / FACHB-805) (Anacystis nidulans R2)).